Here is a 747-residue protein sequence, read N- to C-terminus: Elongation factor G, mitochondrial (747 aa).

The transit peptide at 1–32 (MTLITRVLNSNLPLRLSALKTVRQLQCGYSSH) directs the protein to the mitochondrion. The region spanning 42-319 (ERIRNIGISA…AIIDYLPNPG (278 aa)) is the tr-type G domain. GTP is bound by residues 51-58 (AHIDSGKT), 118-122 (DTPGH), and 172-175 (NKLD).

Belongs to the TRAFAC class translation factor GTPase superfamily. Classic translation factor GTPase family. EF-G/EF-2 subfamily.

The protein localises to the mitochondrion. It participates in protein biosynthesis; polypeptide chain elongation. In terms of biological role, mitochondrial GTPase that catalyzes the GTP-dependent ribosomal translocation step during translation elongation. During this step, the ribosome changes from the pre-translocational (PRE) to the post-translocational (POST) state as the newly formed A-site-bound peptidyl-tRNA and P-site-bound deacylated tRNA move to the P and E sites, respectively. Catalyzes the coordinated movement of the two tRNA molecules, the mRNA and conformational changes in the ribosome. Essential during development as it acts as a retrograde signal from mitochondria to the nucleus to slow down cell proliferation if mitochondrial energy output is low. In Drosophila virilis (Fruit fly), this protein is Elongation factor G, mitochondrial.